Consider the following 370-residue polypeptide: Cobalt-precorrin-5B C(1)-methyltransferase (370 aa).

Belongs to the CbiD family.

The enzyme catalyses Co-precorrin-5B + S-adenosyl-L-methionine = Co-precorrin-6A + S-adenosyl-L-homocysteine. It functions in the pathway cofactor biosynthesis; adenosylcobalamin biosynthesis; cob(II)yrinate a,c-diamide from sirohydrochlorin (anaerobic route): step 6/10. Catalyzes the methylation of C-1 in cobalt-precorrin-5B to form cobalt-precorrin-6A. This chain is Cobalt-precorrin-5B C(1)-methyltransferase, found in Nostoc sp. (strain PCC 7120 / SAG 25.82 / UTEX 2576).